Consider the following 426-residue polypeptide: DNA polymerase processivity factor component OPG148 (426 aa).

It belongs to the orthopoxvirus OPG148 family. In terms of assembly, interacts with the DNA polymerase catalytic subunit OPG071. Interacts with UDG/OPG116. Component of the uracil-DNA glycosylase(UDG)-OPG148-polymerase complex; OPG148 and UDG form a heterodimeric processivity factor that associates with OPG071 to form the processive polymerase holoenzyme. Interacts with OPG117.

Functionally, plays an essential role in viral DNA replication by acting as the polymerase processivity factor together with protein OPG116. Serves as a bridge which links the DNA polymerase OPG071 and the uracil DNA glycosylase. The polypeptide is DNA polymerase processivity factor component OPG148 (OPG148) (Vaccinia virus (strain Copenhagen) (VACV)).